The following is a 382-amino-acid chain: Cytochrome b (382 aa).

Helical transmembrane passes span 28 to 48, 72 to 94, 107 to 127, and 169 to 189; these read YGFLLGIIFFIQILTGVFLAS, WCFRYMHATGASLVFLLTYLHIL, SWISGLIIFALFIVTAFIGYV, and FFVLHFILPFVALCIVFIHIF. Heme b-binding residues include H78 and H92. Heme b-binding residues include H173 and H187. Residue H192 coordinates a ubiquinone. 4 helical membrane passes run 214–234, 274–294, 317–337, and 340–360; these read LLSLDVKGFNNIFILFLLQSI, IPSKTAGLLIVLASLQLLFLL, VPMIWFMCSFYALLWIGCQLP, and IFILYGRLFIISFFSSGLFAL.

It belongs to the cytochrome b family. As to quaternary structure, the main subunits of complex b-c1 are: cytochrome b, cytochrome c1 and the Rieske protein. Heme b serves as cofactor.

Its subcellular location is the mitochondrion inner membrane. Its function is as follows. Component of the ubiquinol-cytochrome c reductase complex (complex III or cytochrome b-c1 complex) that is part of the mitochondrial respiratory chain. The b-c1 complex mediates electron transfer from ubiquinol to cytochrome c. Contributes to the generation of a proton gradient across the mitochondrial membrane that is then used for ATP synthesis. This is Cytochrome b (MT-CYB) from Plasmodium vivax (strain Salvador I).